The chain runs to 89 residues: Small ribosomal subunit protein uS15 (89 aa).

This sequence belongs to the universal ribosomal protein uS15 family. As to quaternary structure, part of the 30S ribosomal subunit. Forms a bridge to the 50S subunit in the 70S ribosome, contacting the 23S rRNA.

In terms of biological role, one of the primary rRNA binding proteins, it binds directly to 16S rRNA where it helps nucleate assembly of the platform of the 30S subunit by binding and bridging several RNA helices of the 16S rRNA. Forms an intersubunit bridge (bridge B4) with the 23S rRNA of the 50S subunit in the ribosome. This is Small ribosomal subunit protein uS15 from Syntrophomonas wolfei subsp. wolfei (strain DSM 2245B / Goettingen).